Here is a 418-residue protein sequence, read N- to C-terminus: AP-3 complex subunit mu-1 (418 aa).

An MHD domain is found at 176 to 417; the sequence is NNEAYFDVVE…VTKAGKFQVR (242 aa).

It belongs to the adaptor complexes medium subunit family. In terms of assembly, adaptor protein complex 3 (AP-3) is a heterotetramer composed of two large adaptins (delta-type subunit AP3D1 and beta-type subunit AP3B1 or AP3B2), a medium adaptin (mu-type subunit AP3M1 or AP3M2) and a small adaptin (sigma-type subunit APS1 or AP3S2). Interacts with AGAP1. AP-3 associates with the BLOC-1 complex.

The protein localises to the golgi apparatus. It localises to the cytoplasmic vesicle membrane. Part of the AP-3 complex, an adaptor-related complex which is not clathrin-associated. The complex is associated with the Golgi region as well as more peripheral structures. It facilitates the budding of vesicles from the Golgi membrane and may be directly involved in trafficking to lysosomes. In concert with the BLOC-1 complex, AP-3 is required to target cargos into vesicles assembled at cell bodies for delivery into neurites and nerve terminals. This is AP-3 complex subunit mu-1 (Ap3m1) from Mus musculus (Mouse).